The sequence spans 349 residues: Fructose-bisphosphate aldolase 2, chloroplastic (349 aa).

The substrate site is built by R47 and K137. E177 functions as the Proton acceptor in the catalytic mechanism. The Schiff-base intermediate with dihydroxyacetone-P role is filled by K219.

This sequence belongs to the class I fructose-bisphosphate aldolase family.

It is found in the plastid. Its subcellular location is the chloroplast. The catalysed reaction is beta-D-fructose 1,6-bisphosphate = D-glyceraldehyde 3-phosphate + dihydroxyacetone phosphate. Its pathway is carbohydrate degradation; glycolysis; D-glyceraldehyde 3-phosphate and glycerone phosphate from D-glucose: step 4/4. In Pisum sativum (Garden pea), this protein is Fructose-bisphosphate aldolase 2, chloroplastic.